Reading from the N-terminus, the 108-residue chain is Inner membrane protein H108R (108 aa).

The helical transmembrane segment at 10 to 32 (LIVIITILITTRELSTTMLIVSL) threads the bilayer. The span at 49 to 64 (ENNTFSMPQKNSFSES) shows a compositional bias: polar residues. The disordered stretch occupies residues 49–69 (ENNTFSMPQKNSFSESYNKDK). Asn50 carries an N-linked (GlcNAc...) asparagine; by host glycan.

It belongs to the asfivirus H108R family.

The protein localises to the virion membrane. The chain is Inner membrane protein H108R from Ornithodoros (relapsing fever ticks).